Here is an 87-residue protein sequence, read N- to C-terminus: Small ribosomal subunit protein uS17 (87 aa).

This sequence belongs to the universal ribosomal protein uS17 family. Part of the 30S ribosomal subunit.

Functionally, one of the primary rRNA binding proteins, it binds specifically to the 5'-end of 16S ribosomal RNA. The chain is Small ribosomal subunit protein uS17 from Neisseria meningitidis serogroup C (strain 053442).